The sequence spans 328 residues: Ferredoxin--NADP reductase (328 aa).

FAD contacts are provided by Glu34, Gln42, Tyr47, Val87, Phe120, Asp283, and Thr323.

This sequence belongs to the ferredoxin--NADP reductase type 2 family. Homodimer. Requires FAD as cofactor.

It carries out the reaction 2 reduced [2Fe-2S]-[ferredoxin] + NADP(+) + H(+) = 2 oxidized [2Fe-2S]-[ferredoxin] + NADPH. In Pediococcus pentosaceus (strain ATCC 25745 / CCUG 21536 / LMG 10740 / 183-1w), this protein is Ferredoxin--NADP reductase.